The sequence spans 475 residues: Ribulose bisphosphate carboxylase large chain (475 aa).

Residues 1–2 constitute a propeptide that is removed on maturation; it reads MS. N-acetylproline is present on Pro-3. An N6,N6,N6-trimethyllysine modification is found at Lys-14. Substrate contacts are provided by Asn-123 and Thr-173. Residue Lys-175 is the Proton acceptor of the active site. Lys-177 serves as a coordination point for substrate. Mg(2+) contacts are provided by Lys-201, Asp-203, and Glu-204. Lys-201 is subject to N6-carboxylysine. The Proton acceptor role is filled by His-294. Positions 295, 327, and 379 each coordinate substrate.

This sequence belongs to the RuBisCO large chain family. Type I subfamily. Heterohexadecamer of 8 large chains and 8 small chains; disulfide-linked. The disulfide link is formed within the large subunit homodimers. Mg(2+) is required as a cofactor. In terms of processing, the disulfide bond which can form in the large chain dimeric partners within the hexadecamer appears to be associated with oxidative stress and protein turnover.

The protein localises to the plastid. It is found in the chloroplast. The catalysed reaction is 2 (2R)-3-phosphoglycerate + 2 H(+) = D-ribulose 1,5-bisphosphate + CO2 + H2O. It catalyses the reaction D-ribulose 1,5-bisphosphate + O2 = 2-phosphoglycolate + (2R)-3-phosphoglycerate + 2 H(+). Its function is as follows. RuBisCO catalyzes two reactions: the carboxylation of D-ribulose 1,5-bisphosphate, the primary event in carbon dioxide fixation, as well as the oxidative fragmentation of the pentose substrate in the photorespiration process. Both reactions occur simultaneously and in competition at the same active site. The protein is Ribulose bisphosphate carboxylase large chain of Cryptomeria japonica (Japanese cedar).